We begin with the raw amino-acid sequence, 212 residues long: MLTPYGRSTILKTTIFASAIAVTGLFFPPVSRAVLILSAAAILGFAFWFFRDPERTPAETGRVILAPADGRVILVEERDHPFTGSRSTLISIFMSPLNVHVNRIPQSGRIRHLQYHPGSFKMAFDHKSMEENERMDIGIESDSLKIFFSQVSGFIARRIVCPLRMDEAVEAGKRFGMIKFGSRVDIIIPQGSTPAVTIGGKTRAGETVIARW.

Serine 182 serves as the catalytic Schiff-base intermediate with substrate; via pyruvic acid. At serine 182 the chain carries Pyruvic acid (Ser); by autocatalysis.

The protein belongs to the phosphatidylserine decarboxylase family. PSD-A subfamily. In terms of assembly, heterodimer of a large membrane-associated beta subunit and a small pyruvoyl-containing alpha subunit. Pyruvate serves as cofactor. Is synthesized initially as an inactive proenzyme. Formation of the active enzyme involves a self-maturation process in which the active site pyruvoyl group is generated from an internal serine residue via an autocatalytic post-translational modification. Two non-identical subunits are generated from the proenzyme in this reaction, and the pyruvate is formed at the N-terminus of the alpha chain, which is derived from the carboxyl end of the proenzyme. The post-translation cleavage follows an unusual pathway, termed non-hydrolytic serinolysis, in which the side chain hydroxyl group of the serine supplies its oxygen atom to form the C-terminus of the beta chain, while the remainder of the serine residue undergoes an oxidative deamination to produce ammonia and the pyruvoyl prosthetic group on the alpha chain.

The protein localises to the cell membrane. The catalysed reaction is a 1,2-diacyl-sn-glycero-3-phospho-L-serine + H(+) = a 1,2-diacyl-sn-glycero-3-phosphoethanolamine + CO2. It participates in phospholipid metabolism; phosphatidylethanolamine biosynthesis; phosphatidylethanolamine from CDP-diacylglycerol: step 2/2. Catalyzes the formation of phosphatidylethanolamine (PtdEtn) from phosphatidylserine (PtdSer). This is Phosphatidylserine decarboxylase proenzyme from Chlorobium luteolum (strain DSM 273 / BCRC 81028 / 2530) (Pelodictyon luteolum).